Here is an 862-residue protein sequence, read N- to C-terminus: Semaphorin-4D (862 aa).

An N-terminal signal peptide occupies residues 1 to 21; sequence MRMCTPIRGLLMALAVMFGTA. The region spanning 22-500 is the Sema domain; that stretch reads MAFAPIPRIT…SNSGVVQAPL (479 aa). The Extracellular segment spans residues 22 to 734; it reads MAFAPIPRIT…TMYLKSSDNR (713 aa). N-linked (GlcNAc...) asparagine glycosylation is found at N49 and N77. Intrachain disulfides connect C97–C108 and C126–C135. N-linked (GlcNAc...) asparagine glycosylation is found at N139 and N191. 2 disulfides stabilise this stretch: C257-C370 and C281-C326. 3 N-linked (GlcNAc...) asparagine glycosylation sites follow: N329, N379, and N419. The PSI domain maps to 502-551; sequence FCGKHGTCEDCVLARDPYCAWSPPTATCVALHQTESPSRGLIQEMSGDAS. 4 disulfide bridges follow: C503–C520, C509–C553, C512–C529, and C576–C624. The 83-residue stretch at 554-636 folds into the Ig-like C2-type domain; sequence PDKSKGSYRQ…EERVKNKTVF (83 aa). Residues N613 and N632 are each glycosylated (N-linked (GlcNAc...) asparagine). The chain crosses the membrane as a helical span at residues 735–755; it reads LLMSLFLFFFVLFLCLFFYNC. Residues 756 to 862 lie on the Cytoplasmic side of the membrane; the sequence is YKGYLPRQCL…KFADSDADGD (107 aa). Residues 794–837 form a disordered region; that stretch reads VEPGSFSQQNGEHPKPALDTGYETEQDTITSKVPTDREDSQRID. A compositionally biased stretch (basic and acidic residues) spans 827–837; the sequence is PTDREDSQRID. Position 833 is a phosphoserine (S833).

This sequence belongs to the semaphorin family. In terms of assembly, homodimer. Interacts with PLXNB2. Interacts with PLXNB1. As to expression, strongly expressed in skeletal muscle, peripheral blood lymphocytes, spleen, and thymus and also expressed at lower levels in testes, brain, kidney, small intestine, prostate, heart, placenta, lung and pancreas, but not in colon and liver.

Its subcellular location is the cell membrane. In terms of biological role, cell surface receptor for PLXNB1 and PLXNB2 that plays an important role in cell-cell signaling. Regulates GABAergic synapse development. Promotes the development of inhibitory synapses in a PLXNB1-dependent manner. Modulates the complexity and arborization of developing neurites in hippocampal neurons by activating PLXNB1 and interaction with PLXNB1 mediates activation of RHOA. Promotes the migration of cerebellar granule cells. Plays a role in the immune system; induces B-cells to aggregate and improves their viability (in vitro). Induces endothelial cell migration through the activation of PTK2B/PYK2, SRC, and the phosphatidylinositol 3-kinase-AKT pathway. In Homo sapiens (Human), this protein is Semaphorin-4D (SEMA4D).